The chain runs to 139 residues: Hydrogenase maturation factor HypA (139 aa).

His-2 contacts Ni(2+). The Zn(2+) site is built by Cys-75, Cys-78, Cys-111, and Cys-114.

The protein belongs to the HypA/HybF family.

Functionally, involved in the maturation of [NiFe] hydrogenases. Required for nickel insertion into the metal center of the hydrogenase. The protein is Hydrogenase maturation factor HypA of Ignicoccus hospitalis (strain KIN4/I / DSM 18386 / JCM 14125).